The chain runs to 375 residues: 4-hydroxy-3-methylbut-2-en-1-yl diphosphate synthase (flavodoxin) (375 aa).

Cys-270, Cys-273, Cys-305, and Glu-312 together coordinate [4Fe-4S] cluster.

It belongs to the IspG family. [4Fe-4S] cluster is required as a cofactor.

The catalysed reaction is (2E)-4-hydroxy-3-methylbut-2-enyl diphosphate + oxidized [flavodoxin] + H2O + 2 H(+) = 2-C-methyl-D-erythritol 2,4-cyclic diphosphate + reduced [flavodoxin]. It participates in isoprenoid biosynthesis; isopentenyl diphosphate biosynthesis via DXP pathway; isopentenyl diphosphate from 1-deoxy-D-xylulose 5-phosphate: step 5/6. Converts 2C-methyl-D-erythritol 2,4-cyclodiphosphate (ME-2,4cPP) into 1-hydroxy-2-methyl-2-(E)-butenyl 4-diphosphate. In Yersinia pestis (strain Pestoides F), this protein is 4-hydroxy-3-methylbut-2-en-1-yl diphosphate synthase (flavodoxin).